The primary structure comprises 166 residues: Putative transmembrane protein encoded by LINC00477 (166 aa).

Asn7 is a glycosylation site (N-linked (GlcNAc...) asparagine). 3 helical membrane passes run 15 to 35, 41 to 61, and 63 to 83; these read VSSF…FFLC, MTGC…VLGP, and PMGM…RFLG. The segment at 127–166 is disordered; it reads LPVPHPPSPLSKCPQHPRPRRTKGPGLRKLWGPGPPFFPS.

It localises to the membrane. The polypeptide is Putative transmembrane protein encoded by LINC00477 (LINC00477) (Homo sapiens (Human)).